The sequence spans 223 residues: MOB-like protein phocein (223 aa).

A disordered region spans residues 1-23 (MTAATENRTVRRNGPGTKRADWN). 4 residues coordinate Zn(2+): Cys-92, Cys-97, His-169, and His-174.

It belongs to the MOB1/phocein family.

It localises to the cytoplasm. It is found in the perinuclear region. The protein resides in the membrane. Its subcellular location is the golgi apparatus. The protein localises to the golgi stack membrane. Functionally, may play a role in membrane trafficking, specifically in membrane budding reactions. In Caenorhabditis elegans, this protein is MOB-like protein phocein.